The following is a 208-amino-acid chain: CASP-like protein 2U9 (208 aa).

Residues 1-27 (MGVADAPSPGNVPVLGDMKNRSAAEMK) are Cytoplasmic-facing. A helical membrane pass occupies residues 28 to 48 (ISVLALRALTLVLLVIALALM). Topologically, residues 49-87 (VSNKQTQSIPIKLPGMASTIFLKKTATFSQITGVQYYVG) are extracellular. A helical membrane pass occupies residues 88 to 108 (ALSVAVAYMFFQMLAGLFTIL). At 109–120 (TTGSIVGSKSRA) the chain is on the cytoplasmic side. Residues 121–141 (WVTFILDQLIAYLMVSAATVV) form a helical membrane-spanning segment. The Extracellular segment spans residues 142–168 (AEVGYIARRGETKVGWNQVCSDFKHYC). Residues 169 to 189 (FIYGFSLVNAFLATIAFLPVV) traverse the membrane as a helical segment. At 190-208 (AVSAFHLFRMYGAQSAQSK) the chain is on the cytoplasmic side.

It belongs to the Casparian strip membrane proteins (CASP) family. Homodimer and heterodimers.

The protein resides in the cell membrane. This chain is CASP-like protein 2U9, found in Selaginella moellendorffii (Spikemoss).